The following is a 157-amino-acid chain: 2-C-methyl-D-erythritol 2,4-cyclodiphosphate synthase (157 aa).

A divalent metal cation is bound by residues Asp8 and His10. Residues 8-10 (DVH) and 34-35 (HS) each bind 4-CDP-2-C-methyl-D-erythritol 2-phosphate. Residue His42 participates in a divalent metal cation binding. 4-CDP-2-C-methyl-D-erythritol 2-phosphate contacts are provided by residues 56-58 (DIG), 61-65 (FPDTD), 100-106 (AQAPKMA), 132-135 (TTTE), Phe139, and Arg142.

This sequence belongs to the IspF family. As to quaternary structure, homotrimer. It depends on a divalent metal cation as a cofactor.

The catalysed reaction is 4-CDP-2-C-methyl-D-erythritol 2-phosphate = 2-C-methyl-D-erythritol 2,4-cyclic diphosphate + CMP. Its pathway is isoprenoid biosynthesis; isopentenyl diphosphate biosynthesis via DXP pathway; isopentenyl diphosphate from 1-deoxy-D-xylulose 5-phosphate: step 4/6. Functionally, involved in the biosynthesis of isopentenyl diphosphate (IPP) and dimethylallyl diphosphate (DMAPP), two major building blocks of isoprenoid compounds. Catalyzes the conversion of 4-diphosphocytidyl-2-C-methyl-D-erythritol 2-phosphate (CDP-ME2P) to 2-C-methyl-D-erythritol 2,4-cyclodiphosphate (ME-CPP) with a corresponding release of cytidine 5-monophosphate (CMP). The chain is 2-C-methyl-D-erythritol 2,4-cyclodiphosphate synthase from Edwardsiella ictaluri (strain 93-146).